The primary structure comprises 240 residues: LexA repressor (240 aa).

The H-T-H motif DNA-binding region spans 26–46 (FDEMKEALDLASKSGIHRLIT). Active-site for autocatalytic cleavage activity residues include S161 and K199.

This sequence belongs to the peptidase S24 family. Homodimer.

It carries out the reaction Hydrolysis of Ala-|-Gly bond in repressor LexA.. Represses a number of genes involved in the response to DNA damage (SOS response), including recA and lexA. In the presence of single-stranded DNA, RecA interacts with LexA causing an autocatalytic cleavage which disrupts the DNA-binding part of LexA, leading to derepression of the SOS regulon and eventually DNA repair. In Brucella melitensis biotype 1 (strain ATCC 23456 / CCUG 17765 / NCTC 10094 / 16M), this protein is LexA repressor.